The primary structure comprises 220 residues: Nicotinamidase (220 aa).

The active site involves D11. 3 residues coordinate Zn(2+): D53, H55, and H94. K119 is an active-site residue. Catalysis depends on C163, which acts as the Nucleophile.

This sequence belongs to the isochorismatase family.

Its subcellular location is the cytoplasm. It is found in the nucleus. The protein localises to the peroxisome. The enzyme catalyses nicotinamide + H2O = nicotinate + NH4(+). The protein operates within cofactor biosynthesis; nicotinate biosynthesis; nicotinate from nicotinamide: step 1/1. Its function is as follows. Catalyzes the deamidation of nicotinamide, an early step in the NAD(+) salvage pathway. This Schizosaccharomyces pombe (strain 972 / ATCC 24843) (Fission yeast) protein is Nicotinamidase (pnc1).